The chain runs to 361 residues: MTDKIKVGLIFGGNSSEYEVSIMSAHNIYEEIDTNKFDVYPMWITNDGYLANDADSRKVLDNPKMEVANPHKVANISNIVELKDRPEIDVFFPIVHGNLGEDGCLQGLFRVLDKPFVGDDVLAAAVTMDKEMTKILAQRAGVPVAKWIAVKRFEYNDPDNNKLDYEYVASQLGSDLFVKPSNQGSSVGVSHVTNEKEYKVALAEAFKYDDKVLVEETVHGTEVETAVLGNDKPIVAGVGQIINAKDSFYTYENKYDDNSTSTLEIPAKLPEGIVEKVRKNALKVFQATECSGLARIDSMLRTEDKEVVLTEVNALPGFTNISMYPKLFEEVGIPYTDLITKLIDYAMERYDHKKTLLHKHD.

The ATP-grasp domain maps to 134 to 344; sequence KILAQRAGVP…YTDLITKLID (211 aa). Position 169 to 224 (169 to 224) interacts with ATP; it reads ASQLGSDLFVKPSNQGSSVGVSHVTNEKEYKVALAEAFKYDDKVLVEETVHGTEVE. The Mg(2+) site is built by Asp297, Glu311, and Asn313.

Belongs to the D-alanine--D-alanine ligase family. It depends on Mg(2+) as a cofactor. Mn(2+) serves as cofactor.

Its subcellular location is the cytoplasm. It catalyses the reaction 2 D-alanine + ATP = D-alanyl-D-alanine + ADP + phosphate + H(+). The protein operates within cell wall biogenesis; peptidoglycan biosynthesis. Functionally, cell wall formation. The sequence is that of D-alanine--D-alanine ligase from Lactobacillus gasseri (strain ATCC 33323 / DSM 20243 / BCRC 14619 / CIP 102991 / JCM 1131 / KCTC 3163 / NCIMB 11718 / NCTC 13722 / AM63).